A 628-amino-acid polypeptide reads, in one-letter code: Netrin-4 (628 aa).

A signal peptide spans M1–A18. The Laminin N-terminal domain occupies C30–S261. N-linked (GlcNAc...) asparagine glycosylation is found at N56 and N163. 12 disulfides stabilise this stretch: C262–C271, C264–C293, C295–C304, C307–C329, C332–C341, C334–C359, C362–C371, C374–C392, C395–C413, C397–C420, C422–C431, and C434–C446. 3 Laminin EGF-like domains span residues C262 to T331, C332 to P394, and C395 to P448. The N-linked (GlcNAc...) asparagine glycan is linked to N353. The N-linked (GlcNAc...) asparagine glycan is linked to N483. 2 disulfides stabilise this stretch: C506/C576 and C520/C627. Residues C506–C627 form the NTR domain.

As to quaternary structure, may form a homodimer. In terms of tissue distribution, expressed in kidney, spleen, mammary gland, aorta, heart, ovary, prostate and fetal spleen.

Its subcellular location is the secreted. The protein resides in the extracellular space. It is found in the extracellular matrix. The protein localises to the basement membrane. Functionally, may play an important role in neural, kidney and vascular development. Promotes neurite elongation from olfactory bulb explants. This Homo sapiens (Human) protein is Netrin-4 (NTN4).